The primary structure comprises 446 residues: N-succinylarginine dihydrolase (446 aa).

Substrate contacts are provided by residues 19-28 (AGLSFGNVAS), Asn-110, and 137-138 (HR). The active site involves Glu-174. Arg-213 is a binding site for substrate. His-249 is an active-site residue. Positions 251 and 364 each coordinate substrate. Cys-370 (nucleophile) is an active-site residue.

The protein belongs to the succinylarginine dihydrolase family. Homodimer.

It carries out the reaction N(2)-succinyl-L-arginine + 2 H2O + 2 H(+) = N(2)-succinyl-L-ornithine + 2 NH4(+) + CO2. It functions in the pathway amino-acid degradation; L-arginine degradation via AST pathway; L-glutamate and succinate from L-arginine: step 2/5. In terms of biological role, catalyzes the hydrolysis of N(2)-succinylarginine into N(2)-succinylornithine, ammonia and CO(2). This Burkholderia multivorans (strain ATCC 17616 / 249) protein is N-succinylarginine dihydrolase.